The following is a 417-amino-acid chain: MFLQNILSVLAFALLIDAAPVKRSTGFVTLDFNVKRSLVDPKDPTVEVKRSPLFLDIEPTEIPVDDTGRNDVGKRGPVAVKLDNEIITYSADITIGSNNQKLSVIVDTGSSDLWVPDSNAVCIPKWPGDRGDFCKNNGSYSPAASSTSKNLNTPFEIKYADGSVAQGNLYQDTVGIGGVSVRDQLFANVRSTSAHKGILGIGFQSNEATRTPYDNLPITLKKQGIISKNAYSLFLNSPEASSGQIIFGGIDKAKYSGSLVDLPITSDRTLSVGLRSVNVMGQNVNVNAGVLLDSGTTISYFTPNIARSIIYALGGQVHYDSSGNEAYVADCKTSGTVDFQFDRNLKISVPASEFLYQLYYTNGEPYPKCEIRVRESEDNILGDNFMRSAYIVYDLDDRKISMAQVKYTSQSNIVAIN.

The signal sequence occupies residues 1–18 (MFLQNILSVLAFALLIDA). Residues 19 to 75 (APVKRSTGFVTLDFNVKRSLVDPKDPTVEVKRSPLFLDIEPTEIPVDDTGRNDVGKR) constitute a propeptide, activation peptide. One can recognise a Peptidase A1 domain in the interval 89 to 403 (YSADITIGSN…DLDDRKISMA (315 aa)). D107 is an active-site residue. A pepstatin A-binding site is contributed by 107–109 (DTG). A disulfide bond links C122 and C134. Residue N137 is glycosylated (N-linked (GlcNAc...) asparagine). 160 to 161 (AD) is a binding site for pepstatin A. D267 provides a ligand contact to Zn(2+). D293 is an active-site residue. Pepstatin A is bound at residue 293-297 (DSGTT). Residues C331 and C369 are joined by a disulfide bond.

This sequence belongs to the peptidase A1 family. In terms of assembly, monomer.

The protein localises to the secreted. The enzyme catalyses Preferential cleavage at the carboxyl of hydrophobic amino acids, but fails to cleave 15-Leu-|-Tyr-16, 16-Tyr-|-Leu-17 and 24-Phe-|-Phe-25 of insulin B chain. Activates trypsinogen, and degrades keratin.. Activity is inhibited by squash aspartic peptidase inhibitor (SQAPI). Its function is as follows. Secreted aspartic peptidases (SAPs) are a group of ten acidic hydrolases considered as key virulence factors. These enzymes supply the fungus with nutrient amino acids as well as are able to degrade the selected host's proteins involved in the immune defense. Moreover, acts toward human hemoglobin though limited proteolysis to generate a variety of antimicrobial hemocidins, enabling to compete with the other microorganisms of the same physiological niche using the microbicidal peptides generated from the host protein. Functionally, plays a key role in defense against host by cleaving histatin-5 (Hst 5), a peptide from human saliva that carries out fungicidal activity. The cleavage rate decreases in an order of SAP2 &gt; SAP9 &gt; SAP3 &gt; SAP7 &gt; SAP4 &gt; SAP1 &gt; SAP8. The first cleavage occurs between residues 'Lys-17' and 'His-18' of Hst 5, giving DSHAKRHHGYKRKFHEK and HHSHRGY peptides. Simultaneously, the DSHAKRHHGY and KRKFHEKHHSHRGY peptides are also formed. This is Secreted aspartic protease 4 from Candida albicans (strain SC5314 / ATCC MYA-2876) (Yeast).